The sequence spans 226 residues: Exosome complex component rrp46 (226 aa).

The disordered stretch occupies residues 205–226 (NESDGHENEKNPKEDVEMDVVA). Positions 207-219 (SDGHENEKNPKED) are enriched in basic and acidic residues.

Belongs to the RNase PH family. Component of the RNA exosome complex. Specifically part of the catalytically inactive RNA exosome core complex (Exo-9) which may associate with the catalytic subunits rrp6 and dis3 in cytoplasmic- and nuclear-specific RNA exosome complex forms. Exo-9 is formed by a hexameric base ring of RNase PH domain-containing subunits and a cap ring consisting of csl4, rrp4 and rrp40.

Its subcellular location is the cytoplasm. The protein resides in the nucleus. The protein localises to the nucleolus. Functionally, non-catalytic component of the RNA exosome complex which has 3'-&gt;5' exoribonuclease activity and participates in a multitude of cellular RNA processing and degradation events. In the nucleus, the RNA exosome complex is involved in proper maturation of stable RNA species such as rRNA, snRNA and snoRNA, in the elimination of RNA processing by-products and non-coding 'pervasive' transcripts, such as antisense RNA species and cryptic unstable transcripts (CUTs), and of mRNAs with processing defects, thereby limiting or excluding their export to the cytoplasm. In the cytoplasm, the RNA exosome complex is involved in general mRNA turnover and in RNA surveillance pathways, preventing translation of aberrant mRNAs. The catalytic inactive RNA exosome core complex of 9 subunits (Exo-9) is proposed to play a pivotal role in the binding and presentation of RNA for ribonucleolysis, and to serve as a scaffold for the association with catalytic subunits and accessory proteins or complexes. ski6 is part of the hexameric ring of RNase PH domain-containing subunits proposed to form a central channel which threads RNA substrates for degradation. The protein is Exosome complex component rrp46 (rrp46) of Schizosaccharomyces pombe (strain 972 / ATCC 24843) (Fission yeast).